The sequence spans 261 residues: Ribosomal RNA small subunit methyltransferase A (261 aa).

S-adenosyl-L-methionine is bound by residues histidine 13, leucine 15, glycine 40, glutamate 61, aspartate 85, and asparagine 105.

The protein belongs to the class I-like SAM-binding methyltransferase superfamily. rRNA adenine N(6)-methyltransferase family. RsmA subfamily.

It is found in the cytoplasm. It catalyses the reaction adenosine(1518)/adenosine(1519) in 16S rRNA + 4 S-adenosyl-L-methionine = N(6)-dimethyladenosine(1518)/N(6)-dimethyladenosine(1519) in 16S rRNA + 4 S-adenosyl-L-homocysteine + 4 H(+). In terms of biological role, specifically dimethylates two adjacent adenosines (A1518 and A1519) in the loop of a conserved hairpin near the 3'-end of 16S rRNA in the 30S particle. May play a critical role in biogenesis of 30S subunits. The protein is Ribosomal RNA small subunit methyltransferase A of Flavobacterium johnsoniae (strain ATCC 17061 / DSM 2064 / JCM 8514 / BCRC 14874 / CCUG 350202 / NBRC 14942 / NCIMB 11054 / UW101) (Cytophaga johnsonae).